The chain runs to 548 residues: Fluconazole resistance protein 1 (548 aa).

The disordered stretch occupies residues 30-94 (SAREDETRKP…WNGPSDPENP (65 aa)). The span at 31-51 (AREDETRKPENTDKKECKPDY) shows a compositional bias: basic and acidic residues. The span at 60-73 (SCSESSTDSDSSGS) shows a compositional bias: low complexity. 12 consecutive transmembrane segments (helical) span residues 104 to 124 (LVVF…SIYT), 139 to 159 (VVAT…PIIF), 179 to 199 (FFFM…GLIV), 203 to 223 (ISGI…ADII), 230 to 250 (LVLG…PLLG), 261 to 281 (FIFW…AFFF), 347 to 367 (IAVA…VFVG), 376 to 396 (VGLA…LFGI), 416 to 436 (FLIV…LFGW), 440 to 460 (VHWI…FNIF), 476 to 496 (ASVF…FPLF), and 511 to 531 (VAWG…IPFI).

It belongs to the major facilitator superfamily.

The protein resides in the membrane. Probable efflux transporter. Confers resistance to the azole derivative fluconazole (FCZ). The protein is Fluconazole resistance protein 1 (FLR1) of Saccharomyces cerevisiae (strain ATCC 204508 / S288c) (Baker's yeast).